A 359-amino-acid chain; its full sequence is Cyclic AMP response element-binding protein B (359 aa).

2 disordered regions span residues methionine 1–glycine 73 and valine 185–isoleucine 238. Over residues asparagine 9–alanine 32 the composition is skewed to low complexity. The segment covering valine 33–asparagine 47 has biased composition (gly residues). The span at proline 48–alanine 70 shows a compositional bias: low complexity. One can recognise a KID domain in the interval lysine 198–serine 257. Residues serine 209, serine 212, and serine 214 each carry the phosphoserine modification. Over residues aspartate 217 to arginine 227 the composition is skewed to basic and acidic residues. Positions threonine 300–aspartate 359 constitute a bZIP domain. The basic motif stretch occupies residues arginine 301 to lysine 326. Residues leucine 328 to leucine 349 are leucine-zipper.

This sequence belongs to the bZIP family. ATF subfamily. Homodimer. Most cells of the adult brain; cell bodies, but not neuropil.

The protein localises to the nucleus. Functionally, isoform E is a PKA-dependent transcriptional activator. Isoform J is a direct antagonist of activation by isoform E in cell culture. Binds the cAMP response element (CRE) (consensus: 5'-GTGACGT[AC][AG]-3'), a sequence present in many viral and cellular promoters. Has a role in long-term memory. The sequence is that of Cyclic AMP response element-binding protein B from Drosophila melanogaster (Fruit fly).